A 360-amino-acid chain; its full sequence is Phenylalanine--tRNA ligase alpha subunit (360 aa).

A Mg(2+)-binding site is contributed by E260.

This sequence belongs to the class-II aminoacyl-tRNA synthetase family. Phe-tRNA synthetase alpha subunit type 1 subfamily. As to quaternary structure, tetramer of two alpha and two beta subunits. Mg(2+) serves as cofactor.

Its subcellular location is the cytoplasm. The catalysed reaction is tRNA(Phe) + L-phenylalanine + ATP = L-phenylalanyl-tRNA(Phe) + AMP + diphosphate + H(+). In Sinorhizobium medicae (strain WSM419) (Ensifer medicae), this protein is Phenylalanine--tRNA ligase alpha subunit.